Consider the following 80-residue polypeptide: SPI-1 type 3 secretion system needle filament protein (80 aa).

It belongs to the SctF family. The core secretion machinery of the T3SS is composed of approximately 20 different proteins, including cytoplasmic components, a base, an export apparatus and a needle. This subunit polymerizes and forms the helical needle filament. Interacts with the needle tip protein SipD/SctA. Interacts with the needle adapter protein PrgJ/SctI, the secretin InvG/SctC and the minor export apparatus protein SpaP/SctR. In vitro, the needle protomer refolds spontaneously to extend the needle from the distal end.

Its subcellular location is the secreted. It is found in the cell surface. Binding of bile salts, including deoxycholate, to the PrgI:SipD interface may inhibit the T3SS function. In terms of biological role, component of the type III secretion system (T3SS), also called injectisome, which is used to inject bacterial effector proteins into eukaryotic host cells. PrgI/SctF1 forms the external needle filament that protrudes from the bacterial surface. Is probably involved in the transduction of an activating signal, thought to be mediated by the distal tip of the needle filament, to the secretion machine. Required for invasion of epithelial cells. Required for the secretion of the effector protein SptP. During infection, can induce innate immune responses. The needle proteins interact with host TLR2 or TLR4, and induce signaling by NF-kappa-B and/or AP-1. This activation is MyD88 dependent and results in increased expression of cytokines, including TNF-alpha, IL-6 and IL-8. This is SPI-1 type 3 secretion system needle filament protein from Salmonella typhimurium (strain LT2 / SGSC1412 / ATCC 700720).